The primary structure comprises 26 residues: uncharacterized protein (26 aa).

This is an uncharacterized protein from Escherichia coli (strain K12).